We begin with the raw amino-acid sequence, 219 residues long: Proteasome subunit beta type-9 (219 aa).

The propeptide at 1–20 (MLRAGAPTGDLPRAGEVHTG) is removed in mature form. Thr-21 functions as the Nucleophile in the catalytic mechanism. An N6-acetyllysine mark is found at Lys-53 and Lys-109.

The protein belongs to the peptidase T1B family. The 26S proteasome consists of a 20S proteasome core and two 19S regulatory subunits. The 20S proteasome core is composed of 28 subunits that are arranged in four stacked rings, resulting in a barrel-shaped structure. The two end rings are each formed by seven alpha subunits, and the two central rings are each formed by seven beta subunits. The catalytic chamber with the active sites is on the inside of the barrel. Component of the immunoproteasome, where it displaces the equivalent housekeeping subunit PSMB6. Component of the spermatoproteasome, a form of the proteasome specifically found in testis. In terms of assembly, (Microbial infection) Interacts with HIV-1 TAT protein. Autocleaved. The resulting N-terminal Thr residue of the mature subunit is responsible for the nucleophile proteolytic activity.

The protein localises to the cytoplasm. Its subcellular location is the nucleus. The catalysed reaction is Cleavage of peptide bonds with very broad specificity.. In terms of biological role, the proteasome is a multicatalytic proteinase complex which is characterized by its ability to cleave peptides with Arg, Phe, Tyr, Leu, and Glu adjacent to the leaving group at neutral or slightly basic pH. The proteasome has an ATP-dependent proteolytic activity. This subunit is involved in antigen processing to generate class I binding peptides. Replacement of PSMB6 by PSMB9 increases the capacity of the immunoproteasome to cleave model peptides after hydrophobic and basic residues. This Homo sapiens (Human) protein is Proteasome subunit beta type-9 (PSMB9).